Reading from the N-terminus, the 287-residue chain is Elongation factor Ts (287 aa).

An involved in Mg(2+) ion dislocation from EF-Tu region spans residues 80-83 (TDFL).

This sequence belongs to the EF-Ts family.

The protein localises to the cytoplasm. In terms of biological role, associates with the EF-Tu.GDP complex and induces the exchange of GDP to GTP. It remains bound to the aminoacyl-tRNA.EF-Tu.GTP complex up to the GTP hydrolysis stage on the ribosome. This chain is Elongation factor Ts, found in Pseudomonas syringae pv. tomato (strain ATCC BAA-871 / DC3000).